The sequence spans 433 residues: Serine hydroxymethyltransferase (433 aa).

Residues leucine 121 and 125–127 (GHI) each bind (6S)-5,6,7,8-tetrahydrofolate. The residue at position 231 (lysine 231) is an N6-(pyridoxal phosphate)lysine.

This sequence belongs to the SHMT family. Homodimer. Pyridoxal 5'-phosphate serves as cofactor.

Its subcellular location is the cytoplasm. The protein operates within amino-acid biosynthesis; glycine biosynthesis; glycine from L-serine: step 1/1. Catalyzes the reversible interconversion of serine and glycine with a modified folate serving as the one-carbon carrier. Also exhibits a pteridine-independent aldolase activity toward beta-hydroxyamino acids, producing glycine and aldehydes, via a retro-aldol mechanism. The protein is Serine hydroxymethyltransferase of Picrophilus torridus (strain ATCC 700027 / DSM 9790 / JCM 10055 / NBRC 100828 / KAW 2/3).